Consider the following 96-residue polypeptide: Co-chaperonin GroES (96 aa).

The protein belongs to the GroES chaperonin family. As to quaternary structure, heptamer of 7 subunits arranged in a ring. Interacts with the chaperonin GroEL.

The protein resides in the cytoplasm. Together with the chaperonin GroEL, plays an essential role in assisting protein folding. The GroEL-GroES system forms a nano-cage that allows encapsulation of the non-native substrate proteins and provides a physical environment optimized to promote and accelerate protein folding. GroES binds to the apical surface of the GroEL ring, thereby capping the opening of the GroEL channel. The chain is Co-chaperonin GroES from Photobacterium profundum (strain SS9).